The sequence spans 191 residues: Akirin-1 (191 aa).

The segment at Leu17 to Pro70 is disordered. The residue at position 22 (Ser22) is a Phosphoserine. Positions Pro23 to Cys28 match the Nuclear localization signal motif. The span at Leu31–Leu48 shows a compositional bias: pro residues. Positions Gln49–Gln59 are enriched in polar residues. Thr71 carries the phosphothreonine modification. Residues Ser188 to Ser191 carry the SYVS motif motif.

Belongs to the akirin family. Expressed in macrophages and satellite cells.

It localises to the nucleus. In terms of biological role, molecular adapter that acts as a bridge between proteins, and which is involved skeletal muscle development. Functions as a signal transducer for MSTN during skeletal muscle regeneration and myogenesis. May regulate chemotaxis of both macrophages and myoblasts by reorganising actin cytoskeleton, leading to more efficient lamellipodia formation via a PI3 kinase dependent pathway. In contrast to AKIRIN2, not involved in nuclear import of proteasomes. The chain is Akirin-1 from Mus musculus (Mouse).